A 465-amino-acid polypeptide reads, in one-letter code: D-arabinitol 4-dehydrogenase (465 aa).

This sequence belongs to the mannitol dehydrogenase family.

The enzyme catalyses D-arabinitol + NAD(+) = D-xylulose + NADH + H(+). It participates in carbohydrate metabolism; D-arabinitol metabolism. The chain is D-arabinitol 4-dehydrogenase (dalD) from Ralstonia nicotianae (strain ATCC BAA-1114 / GMI1000) (Ralstonia solanacearum).